The chain runs to 464 residues: Fumarate hydratase class II 1 (464 aa).

Substrate contacts are provided by residues 96–98 (SGT), 127–130 (HPND), 137–139 (SSN), and Thr185. His186 serves as the catalytic Proton donor/acceptor. The active site involves Ser316. Residues Ser317 and 322-324 (KVN) contribute to the substrate site.

It belongs to the class-II fumarase/aspartase family. Fumarase subfamily. In terms of assembly, homotetramer.

The protein localises to the cytoplasm. It catalyses the reaction (S)-malate = fumarate + H2O. It participates in carbohydrate metabolism; tricarboxylic acid cycle; (S)-malate from fumarate: step 1/1. Involved in the TCA cycle. Catalyzes the stereospecific interconversion of fumarate to L-malate. The sequence is that of Fumarate hydratase class II 1 from Pseudomonas aeruginosa (strain ATCC 15692 / DSM 22644 / CIP 104116 / JCM 14847 / LMG 12228 / 1C / PRS 101 / PAO1).